Consider the following 281-residue polypeptide: E2F-associated phosphoprotein (281 aa).

Residue methionine 1 is modified to N-acetylmethionine. Residues 1–27 (MNRLQDDYDPYAVEEPSDEEPALSSSE) are disordered. Over residues 15-27 (EPSDEEPALSSSE) the composition is skewed to acidic residues. Serine 17 bears the Phosphoserine mark. Threonine 37 carries the post-translational modification Phosphothreonine. Serine 109 and serine 111 each carry phosphoserine. Positions 222–245 (PENRRKRRSAKKMRSNPEDPAERE) are disordered. A compositionally biased stretch (basic residues) spans 225-235 (RRKRRSAKKMR). Residues 236–245 (SNPEDPAERE) show a composition bias toward basic and acidic residues.

In terms of assembly, interacts with E2F1. The C-terminal half binds the N-terminal of E2F1. Also interacts with E2F2 and E2F3, but not E2F4.

The protein resides in the cytoplasm. It localises to the nucleus. Its function is as follows. May play an important role in the fine-tuning of both major E2F1 activities, the regulation of the cell-cycle and the induction of apoptosis. Promotes S-phase entry, and inhibits p14(ARP) expression. In Mus musculus (Mouse), this protein is E2F-associated phosphoprotein (Eapp).